A 509-amino-acid chain; its full sequence is tRNA-2-methylthio-N(6)-dimethylallyladenosine synthase (509 aa).

Residues 1-15 (MNEQQRLASQQVNSS) show a composition bias toward polar residues. The segment at 1–26 (MNEQQRLASQQVNSSTKKEEKDYSKY) is disordered. A compositionally biased stretch (basic and acidic residues) spans 16 to 25 (TKKEEKDYSK). In terms of domain architecture, MTTase N-terminal spans 66 to 184 (RKFYIRTYGC…LPYILKDAMF (119 aa)). [4Fe-4S] cluster contacts are provided by Cys75, Cys111, Cys145, Cys221, Cys225, and Cys228. The Radical SAM core domain occupies 207-437 (RRGDIKAWVN…NALVNKLAIE (231 aa)). The region spanning 440–503 (NRYKGQIVEV…TWSLNGELVE (64 aa)) is the TRAM domain.

The protein belongs to the methylthiotransferase family. MiaB subfamily. In terms of assembly, monomer. It depends on [4Fe-4S] cluster as a cofactor.

The protein resides in the cytoplasm. It carries out the reaction N(6)-dimethylallyladenosine(37) in tRNA + (sulfur carrier)-SH + AH2 + 2 S-adenosyl-L-methionine = 2-methylsulfanyl-N(6)-dimethylallyladenosine(37) in tRNA + (sulfur carrier)-H + 5'-deoxyadenosine + L-methionine + A + S-adenosyl-L-homocysteine + 2 H(+). Catalyzes the methylthiolation of N6-(dimethylallyl)adenosine (i(6)A), leading to the formation of 2-methylthio-N6-(dimethylallyl)adenosine (ms(2)i(6)A) at position 37 in tRNAs that read codons beginning with uridine. The sequence is that of tRNA-2-methylthio-N(6)-dimethylallyladenosine synthase from Bacillus cereus (strain AH187).